We begin with the raw amino-acid sequence, 164 residues long: uncharacterized protein (164 aa).

2 CBS domains span residues 9–66 (ATTK…DIDS) and 72–128 (MTKD…VHTM).

This is an uncharacterized protein from Acidianus ambivalens (Desulfurolobus ambivalens).